Consider the following 334-residue polypeptide: Holliday junction branch migration complex subunit RuvB (334 aa).

Residues 4–186 are large ATPase domain (RuvB-L); that stretch reads ADRLIAPISN…FGIVQRLEYY (183 aa). ATP is bound by residues Ile25, Arg26, Gly67, Lys70, Thr71, Thr72, 133–135, Arg176, Tyr186, and Arg223; that span reads EDY. Thr71 contacts Mg(2+). Positions 187-257 are small ATPAse domain (RuvB-S); sequence KVADLQHIVQ…TADRALNMLD (71 aa). The head domain (RuvB-H) stretch occupies residues 260–334; sequence HQGFDYMDRK…RAYLHFGIEK (75 aa). Residues Arg315 and Arg320 each contribute to the DNA site.

The protein belongs to the RuvB family. In terms of assembly, homohexamer. Forms an RuvA(8)-RuvB(12)-Holliday junction (HJ) complex. HJ DNA is sandwiched between 2 RuvA tetramers; dsDNA enters through RuvA and exits via RuvB. An RuvB hexamer assembles on each DNA strand where it exits the tetramer. Each RuvB hexamer is contacted by two RuvA subunits (via domain III) on 2 adjacent RuvB subunits; this complex drives branch migration. In the full resolvosome a probable DNA-RuvA(4)-RuvB(12)-RuvC(2) complex forms which resolves the HJ.

It is found in the cytoplasm. It carries out the reaction ATP + H2O = ADP + phosphate + H(+). The RuvA-RuvB-RuvC complex processes Holliday junction (HJ) DNA during genetic recombination and DNA repair, while the RuvA-RuvB complex plays an important role in the rescue of blocked DNA replication forks via replication fork reversal (RFR). RuvA specifically binds to HJ cruciform DNA, conferring on it an open structure. The RuvB hexamer acts as an ATP-dependent pump, pulling dsDNA into and through the RuvAB complex. RuvB forms 2 homohexamers on either side of HJ DNA bound by 1 or 2 RuvA tetramers; 4 subunits per hexamer contact DNA at a time. Coordinated motions by a converter formed by DNA-disengaged RuvB subunits stimulates ATP hydrolysis and nucleotide exchange. Immobilization of the converter enables RuvB to convert the ATP-contained energy into a lever motion, pulling 2 nucleotides of DNA out of the RuvA tetramer per ATP hydrolyzed, thus driving DNA branch migration. The RuvB motors rotate together with the DNA substrate, which together with the progressing nucleotide cycle form the mechanistic basis for DNA recombination by continuous HJ branch migration. Branch migration allows RuvC to scan DNA until it finds its consensus sequence, where it cleaves and resolves cruciform DNA. The polypeptide is Holliday junction branch migration complex subunit RuvB (Vibrio cholerae serotype O1 (strain ATCC 39541 / Classical Ogawa 395 / O395)).